Reading from the N-terminus, the 647-residue chain is tRNA 5-methylaminomethyl-2-thiouridine biosynthesis bifunctional protein MnmC (647 aa).

Residues 1–235 (MSIPPFSQAS…KRDMLCGRFT (235 aa)) are tRNA (mnm(5)s(2)U34)-methyltransferase. An FAD-dependent cmnm(5)s(2)U34 oxidoreductase region spans residues 250 to 647 (IGGGIAGTAS…RGLACHPLRR (398 aa)).

The protein in the N-terminal section; belongs to the methyltransferase superfamily. tRNA (mnm(5)s(2)U34)-methyltransferase family. In the C-terminal section; belongs to the DAO family. FAD serves as cofactor.

The protein resides in the cytoplasm. It carries out the reaction 5-aminomethyl-2-thiouridine(34) in tRNA + S-adenosyl-L-methionine = 5-methylaminomethyl-2-thiouridine(34) in tRNA + S-adenosyl-L-homocysteine + H(+). Catalyzes the last two steps in the biosynthesis of 5-methylaminomethyl-2-thiouridine (mnm(5)s(2)U) at the wobble position (U34) in tRNA. Catalyzes the FAD-dependent demodification of cmnm(5)s(2)U34 to nm(5)s(2)U34, followed by the transfer of a methyl group from S-adenosyl-L-methionine to nm(5)s(2)U34, to form mnm(5)s(2)U34. In Methylobacillus flagellatus (strain ATCC 51484 / DSM 6875 / VKM B-1610 / KT), this protein is tRNA 5-methylaminomethyl-2-thiouridine biosynthesis bifunctional protein MnmC.